Here is a 61-residue protein sequence, read N- to C-terminus: Large ribosomal subunit protein bL28 (61 aa).

Belongs to the bacterial ribosomal protein bL28 family.

The polypeptide is Large ribosomal subunit protein bL28 (rpmB) (Geobacillus stearothermophilus (Bacillus stearothermophilus)).